Reading from the N-terminus, the 297-residue chain is Formamidopyrimidine-DNA glycosylase (297 aa).

The active-site Schiff-base intermediate with DNA is the Pro2. Glu3 serves as the catalytic Proton donor. The Proton donor; for beta-elimination activity role is filled by Lys58. DNA contacts are provided by His106, Arg125, and Arg168. Residues 259–295 form an FPG-type zinc finger; it reads RVYDREGLACTARGCRGRVRRIVQAGRSTFYCETCQP. Arg285 (proton donor; for delta-elimination activity) is an active-site residue.

The protein belongs to the FPG family. Monomer. The cofactor is Zn(2+).

It carries out the reaction Hydrolysis of DNA containing ring-opened 7-methylguanine residues, releasing 2,6-diamino-4-hydroxy-5-(N-methyl)formamidopyrimidine.. The catalysed reaction is 2'-deoxyribonucleotide-(2'-deoxyribose 5'-phosphate)-2'-deoxyribonucleotide-DNA = a 3'-end 2'-deoxyribonucleotide-(2,3-dehydro-2,3-deoxyribose 5'-phosphate)-DNA + a 5'-end 5'-phospho-2'-deoxyribonucleoside-DNA + H(+). In terms of biological role, involved in base excision repair of DNA damaged by oxidation or by mutagenic agents. Acts as a DNA glycosylase that recognizes and removes damaged bases. Has a preference for oxidized purines, such as 7,8-dihydro-8-oxoguanine (8-oxoG). Has AP (apurinic/apyrimidinic) lyase activity and introduces nicks in the DNA strand. Cleaves the DNA backbone by beta-delta elimination to generate a single-strand break at the site of the removed base with both 3'- and 5'-phosphates. This is Formamidopyrimidine-DNA glycosylase from Methylobacterium sp. (strain 4-46).